The sequence spans 166 residues: NAD(P)H-quinone oxidoreductase subunit I, chloroplastic (166 aa).

2 consecutive 4Fe-4S ferredoxin-type domains span residues 55–84 (GRIH…VDWK) and 95–124 (LNYS…MTEE). [4Fe-4S] cluster contacts are provided by cysteine 64, cysteine 67, cysteine 70, cysteine 74, cysteine 104, cysteine 107, cysteine 110, and cysteine 114.

Belongs to the complex I 23 kDa subunit family. NDH is composed of at least 16 different subunits, 5 of which are encoded in the nucleus. [4Fe-4S] cluster is required as a cofactor.

The protein resides in the plastid. The protein localises to the chloroplast thylakoid membrane. The enzyme catalyses a plastoquinone + NADH + (n+1) H(+)(in) = a plastoquinol + NAD(+) + n H(+)(out). It catalyses the reaction a plastoquinone + NADPH + (n+1) H(+)(in) = a plastoquinol + NADP(+) + n H(+)(out). In terms of biological role, NDH shuttles electrons from NAD(P)H:plastoquinone, via FMN and iron-sulfur (Fe-S) centers, to quinones in the photosynthetic chain and possibly in a chloroplast respiratory chain. The immediate electron acceptor for the enzyme in this species is believed to be plastoquinone. Couples the redox reaction to proton translocation, and thus conserves the redox energy in a proton gradient. This Aphanactis jamesoniana protein is NAD(P)H-quinone oxidoreductase subunit I, chloroplastic.